The following is a 366-amino-acid chain: Phospho-2-dehydro-3-deoxyheptonate aldolase (366 aa).

Belongs to the class-I DAHP synthase family.

The enzyme catalyses D-erythrose 4-phosphate + phosphoenolpyruvate + H2O = 7-phospho-2-dehydro-3-deoxy-D-arabino-heptonate + phosphate. The protein operates within metabolic intermediate biosynthesis; chorismate biosynthesis; chorismate from D-erythrose 4-phosphate and phosphoenolpyruvate: step 1/7. Stereospecific condensation of phosphoenolpyruvate (PEP) and D-erythrose-4-phosphate (E4P) giving rise to 3-deoxy-D-arabino-heptulosonate-7-phosphate (DAHP). The polypeptide is Phospho-2-dehydro-3-deoxyheptonate aldolase (aroG) (Corynebacterium glutamicum (strain ATCC 13032 / DSM 20300 / JCM 1318 / BCRC 11384 / CCUG 27702 / LMG 3730 / NBRC 12168 / NCIMB 10025 / NRRL B-2784 / 534)).